Reading from the N-terminus, the 1062-residue chain is MGKREDIKKILVIGSGPIVIGQAAEFDYAGTQACQALKEEGYEVILVNSNPATIMTDTTMADRVYIEPLTLEFVSRIIRMERPDGILPTLGGQTGLNMAVELDQAGILKEYNVELLGTKLDSIQQAEDRDLFRALMKELNEPVPDSEIIHTLEEAYTFVERVGYPIIVRPAYTLGGTGGGLVYNEEDLVEIVTSGLKYSPVTQCLVEKSIAGFKEIEYEVMRDGKDHAIVVCNMENIDPVGVHTGDSIVVAPSQTLSDREYQMLRNSSLKIIRALGIEGGCNVQFALDPDSFQYYIIEVNPRVSRSSALASKATGYPIAKIAAKIAVGYTLDELLNPITQTTYASFEPALDYVVSKIPRWPFDKFEAANRSLGTQMKATGEVMAIGRNLEESLLKAVRSLEAGVYHLDQPDVNDLDKESLEKKLTKPDDERLFALGEAIRRGYTIEELWALTKIDRFFLRSFARIIQLETQLKENVGDLELLKEAKERGFSDMIIADLWGTSEQEVYELRMNHGLSPVYKMVDTCAAEFASATPYFYGTYEEENESERTDKKSILVLGSGPIRIGQGIEFDYATVHTVWAIKEAGYEAIIVNNNPETVSTDFSTSDKLYFEPLTVEDVMHIVNLEQPEGVIVQFGGQTAINLASELAARGVKIIGTALEDMDRAEDRDKFEQTLVELNIPQPLGDTATSIEEARQIAERIGYPVLVRPSYVLGGRAMEIVYKEEELLNYMAHAVKVNPKHPVLIDRYLTGKELEVDAISDGENVYIPGIMEHIERAGVHSGDSIAVYPPQTVPESLKQKLIERTIELARGLRIVGLLNIQFVWHKDDVYVLEVNPRSSRTVPFLSKVTGVPMANVATKVMLGKTLPQLGYETGYHPEAKEVSVKVPVFSFAKLRRVDITLGPEMKSTGEVMGRDKTLEKALYKGLIASGMSIPTHGSVLFTIADKDKQEAISLAKRFYQIGFSILATEGTAHILHEEGIPVTTVNKISDEKPHLLDVIRAGDAQFVINTLTRGKQPARDGFRIRRESVENGVVCLTSLDTAEALLRVLESITFSAESMPVMQ.

The interval 1–401 is carboxyphosphate synthetic domain; it reads MGKREDIKKI…SLLKAVRSLE (401 aa). Residues R129, R169, G175, G176, K208, I210, E215, G241, V242, H243, Q284, and E298 each coordinate ATP. The ATP-grasp 1 domain occupies 133 to 327; that stretch reads RALMKELNEP…IAKIAAKIAV (195 aa). The Mg(2+) site is built by Q284, E298, and N300. Mn(2+) contacts are provided by Q284, E298, and N300. Positions 402–546 are oligomerization domain; the sequence is AGVYHLDQPD…YGTYEEENES (145 aa). A carbamoyl phosphate synthetic domain region spans residues 547-929; sequence ERTDKKSILV…ALYKGLIASG (383 aa). An ATP-grasp 2 domain is found at 671-861; sequence EQTLVELNIP…MANVATKVML (191 aa). Residues R707, R746, L748, E752, G777, V778, H779, S780, Q820, and E832 each contribute to the ATP site. Q820, E832, and N834 together coordinate Mg(2+). Positions 820, 832, and 834 each coordinate Mn(2+). One can recognise an MGS-like domain in the interval 930–1062; that stretch reads MSIPTHGSVL…FSAESMPVMQ (133 aa). Positions 930–1062 are allosteric domain; it reads MSIPTHGSVL…FSAESMPVMQ (133 aa).

The protein belongs to the CarB family. Composed of two chains; the small (or glutamine) chain promotes the hydrolysis of glutamine to ammonia, which is used by the large (or ammonia) chain to synthesize carbamoyl phosphate. Tetramer of heterodimers (alpha,beta)4. The cofactor is Mg(2+). Mn(2+) serves as cofactor.

It catalyses the reaction hydrogencarbonate + L-glutamine + 2 ATP + H2O = carbamoyl phosphate + L-glutamate + 2 ADP + phosphate + 2 H(+). It carries out the reaction hydrogencarbonate + NH4(+) + 2 ATP = carbamoyl phosphate + 2 ADP + phosphate + 2 H(+). The protein operates within amino-acid biosynthesis; L-arginine biosynthesis; carbamoyl phosphate from bicarbonate: step 1/1. It functions in the pathway pyrimidine metabolism; UMP biosynthesis via de novo pathway; (S)-dihydroorotate from bicarbonate: step 1/3. Its function is as follows. Small subunit of the glutamine-dependent carbamoyl phosphate synthetase (CPSase). CPSase catalyzes the formation of carbamoyl phosphate from the ammonia moiety of glutamine, carbonate, and phosphate donated by ATP, constituting the first step of the biosynthetic pathway leading to pyrimidine nucleotides. The large subunit (synthetase) binds the substrates ammonia (free or transferred from glutamine from the small subunit), hydrogencarbonate and ATP and carries out an ATP-coupled ligase reaction, activating hydrogencarbonate by forming carboxy phosphate which reacts with ammonia to form carbamoyl phosphate. In Halalkalibacterium halodurans (strain ATCC BAA-125 / DSM 18197 / FERM 7344 / JCM 9153 / C-125) (Bacillus halodurans), this protein is Carbamoyl phosphate synthase pyrimidine-specific large chain (pyrAB).